Consider the following 297-residue polypeptide: tRNA dimethylallyltransferase (297 aa).

Residue 10–17 (GITASGKS) coordinates ATP. 12 to 17 (TASGKS) lines the substrate pocket. Residues 36–39 (DSKQ) are interaction with substrate tRNA.

This sequence belongs to the IPP transferase family. In terms of assembly, monomer. Mg(2+) is required as a cofactor.

The catalysed reaction is adenosine(37) in tRNA + dimethylallyl diphosphate = N(6)-dimethylallyladenosine(37) in tRNA + diphosphate. Its function is as follows. Catalyzes the transfer of a dimethylallyl group onto the adenine at position 37 in tRNAs that read codons beginning with uridine, leading to the formation of N6-(dimethylallyl)adenosine (i(6)A). The sequence is that of tRNA dimethylallyltransferase from Wolbachia pipientis wMel.